The sequence spans 960 residues: Dynamin-like GTPase OPA1, mitochondrial (960 aa).

Residues 1 to 87 (MWRLRRAAVA…IKYGYQPRRN (87 aa)) constitute a mitochondrion transit peptide. Topologically, residues 88-96 (FWPARLATR) are mitochondrial matrix. The helical transmembrane segment at 97-113 (LLKLRYLILGSAVGGGY) threads the bilayer. Over 114 to 770 (TAKKTFDQWK…NAIENMVGPD (657 aa)) the chain is Mitochondrial intermembrane. Short sequence motifs (LQQQIQ motif) lie at residues 181-186 (DFFTSG) and 217-222 (QLQEEL). Residues 210-254 (SDKEKIDQLQEELLHTQLKYQRILERLEKENKELRKLVLQKDDKG) adopt a coiled-coil conformation. Lys228 is subject to N6-acetyllysine. The LQQQIQ motif signature appears at 235-240 (RLEKEN). Positions 285–561 (QDHLPRVVVV…FWKMVRESVE (277 aa)) constitute a Dynamin-type G domain. A G1 motif region spans residues 295 to 302 (GDQSAGKT). GTP is bound by residues Ser298, Gly300, Lys301, Thr302, Ser303, and Gly317. Thr302 contributes to the Mg(2+) binding site. The interval 321–324 (MMTR) is G2 motif. The Mg(2+) site is built by Thr323 and Asp398. The segment at 398–401 (DLPG) is G3 motif. Positions 467 to 470 (TKVD) are G4 motif. Positions 468, 470, 503, 506, and 507 each coordinate GTP. The segment at 501-504 (VVTG) is G5 motif. Stalk region stretches follow at residues 589 to 836 (DRNE…IKDT) and 874 to 928 (CNDV…IKLL). Residues 736-856 (SDKQQWDAAI…KTALNHCNLC (121 aa)) form a paddle region region. The stretch at 771-781 (WKKRWLYWKNR) is an intramembrane region. Residues 782–960 (TQEQCVHNET…AFIEALHQEK (179 aa)) lie on the Mitochondrial intermembrane side of the membrane. Cys856 and Cys874 form a disulfide bridge. A coiled-coil region spans residues 895-960 (RQQLTNTEVR…AFIEALHQEK (66 aa)).

This sequence belongs to the TRAFAC class dynamin-like GTPase superfamily. Dynamin/Fzo/YdjA family. In terms of assembly, oligomeric complex consisting of membrane-bound and soluble forms of OPA1. Interacts with RCC1L; RCC1L acts as a guanine nucleotide exchange factor (GEF) for OPA1 by exchanging bound GDP for free GTP. Interacts with CHCHD3 and IMMT; these interactions occur preferentially with soluble OPA1 forms. Interacts with PRELID1. Cleaved by OMA1 or YME1L downstream of the transmembrane region in response to different signals to generate soluble forms. Cleaved by OMA1 at position S1 following stress conditions, generating the short soluble form (Dynamin-like GTPase OPA1, short form; S-OPA1). AFG3L2 is involved in the regulation of OMA1-dependent processing of OPA1. PARL-dependent proteolytic processing releases an antiapoptotic soluble form not required for mitochondrial fusion. Post-translationally, cleavage at position S2 by YME1L is required to mediate oxidative phosphorylation (OXPHOS)-induced mitochondrial fusion. Cleavage occurs in the sequence motif Leu-Gln-Gln-Gln-Ile-Gln (LQQQIQ). In terms of processing, cleavage at position S2 by YME1L is required to mediate oxidative phosphorylation (OXPHOS)-induced mitochondrial fusion. Cleavage occurs in the sequence motif Leu-Gln-Gln-Gln-Ile-Gln (LQQQIQ). Cleavage at position S3 by YME1L is required for membrane tubulation. Cleavage at position S3 by YME1L is required for membrane tubulation. As to expression, highly expressed in retina. Also expressed in brain, testis, heart and skeletal muscle. Low levels of all isoforms expressed in a variety of tissues. In terms of tissue distribution, expressed in retina, skeletal muscle, heart, lung, ovary, colon, thyroid gland, leukocytes and fetal brain. Low levels of all isoforms expressed in a variety of tissues. Isoform 2 expressed in colon, liver, kidney, thyroid gland and leukocytes.

The protein localises to the mitochondrion inner membrane. It localises to the mitochondrion intermembrane space. It catalyses the reaction GTP + H2O = GDP + phosphate + H(+). Activated by guanine nucleotide exchange factor RCC1L. In terms of biological role, dynamin-related GTPase that is essential for normal mitochondrial morphology by mediating fusion of the mitochondrial inner membranes, regulating cristae morphology and maintaining respiratory chain function. Exists in two forms: the transmembrane, long form (Dynamin-like GTPase OPA1, long form; L-OPA1), which is tethered to the inner mitochondrial membrane, and the short soluble form (Dynamin-like GTPase OPA1, short form; S-OPA1), which results from proteolytic cleavage and localizes in the intermembrane space. Both forms (L-OPA1 and S-OPA1) cooperate to catalyze the fusion of the mitochondrial inner membrane. The equilibrium between L-OPA1 and S-OPA1 is essential: excess levels of S-OPA1, produced by cleavage by OMA1 following loss of mitochondrial membrane potential, lead to an impaired equilibrium between L-OPA1 and S-OPA1, inhibiting mitochondrial fusion. The balance between L-OPA1 and S-OPA1 also influences cristae shape and morphology. Involved in remodeling cristae and the release of cytochrome c during apoptosis. Proteolytic processing by PARL in response to intrinsic apoptotic signals may lead to disassembly of OPA1 oligomers and release of the caspase activator cytochrome C (CYCS) into the mitochondrial intermembrane space. Acts as a regulator of T-helper Th17 cells, which are characterized by cells with fused mitochondria with tight cristae, by mediating mitochondrial membrane remodeling: OPA1 is required for interleukin-17 (IL-17) production. Its role in mitochondrial morphology is required for mitochondrial genome maintenance. Functionally, constitutes the transmembrane long form (L-OPA1) that plays a central role in mitochondrial inner membrane fusion and cristae morphology. L-OPA1 and the soluble short form (S-OPA1) form higher-order helical assemblies that coordinate the fusion of mitochondrial inner membranes. Inner membrane-anchored L-OPA1 molecules initiate membrane remodeling by recruiting soluble S-OPA1 to rapidly polymerize into a flexible cylindrical scaffold encaging the mitochondrial inner membrane. Once at the membrane surface, the formation of S-OPA1 helices induce bilayer curvature. OPA1 dimerization through the paddle region, which inserts into cardiolipin-containing membrane, promotes GTP hydrolysis and the helical assembly of a flexible OPA1 lattice on the membrane, which drives membrane curvature and mitochondrial fusion. Plays a role in the maintenance and remodeling of mitochondrial cristae, some invaginations of the mitochondrial inner membrane that provide an increase in the surface area. Probably acts by forming helical filaments at the inside of inner membrane tubes with the shape and dimensions of crista junctions. The equilibrium between L-OPA1 and S-OPA1 influences cristae shape and morphology: increased L-OPA1 levels promote cristae stacking and elongated mitochondria, while increased S-OPA1 levels correlated with irregular cristae packing and round mitochondria shape. Constitutes the soluble short form (S-OPA1) generated by cleavage by OMA1, which plays a central role in mitochondrial inner membrane fusion and cristae morphology. The transmembrane long form (L-OPA1) and the S-OPA1 form higher-order helical assemblies that coordinate the fusion of mitochondrial inner membranes. Inner membrane-anchored L-OPA1 molecules initiate membrane remodeling by recruiting soluble S-OPA1 to rapidly polymerize into a flexible cylindrical scaffold encaging the mitochondrial inner membrane. Once at the membrane surface, the formation of S-OPA1 helices induce bilayer curvature. OPA1 dimerization through the paddle region, which inserts into cardiolipin-containing membrane, promotes GTP hydrolysis and the helical assembly of a flexible OPA1 lattice on the membrane, which drives membrane curvature and mitochondrial fusion. Excess levels of S-OPA1 produced by cleavage by OMA1 following stress conditions that induce loss of mitochondrial membrane potential, lead to an impaired equilibrium between L-OPA1 and S-OPA1, thereby inhibiting mitochondrial fusion. Involved in mitochondrial safeguard in response to transient mitochondrial membrane depolarization by mediating flickering: cleavage by OMA1 leads to excess production of S-OPA1, preventing mitochondrial hyperfusion. Plays a role in the maintenance and remodeling of mitochondrial cristae, some invaginations of the mitochondrial inner membrane that provide an increase in the surface area. Probably acts by forming helical filaments at the inside of inner membrane tubes with the shape and dimensions of crista junctions. The equilibrium between L-OPA1 and S-OPA1 influences cristae shape and morphology: increased L-OPA1 levels promote cristae stacking and elongated mitochondria, while increased S-OPA1 levels correlated with irregular cristae packing and round mitochondria shape. Its function is as follows. Coexpression of isoform 1 with shorter alternative products is required for optimal activity in promoting mitochondrial fusion. In terms of biological role, isoforms that contain the alternative exon 4b are required for mitochondrial genome maintenance, possibly by anchoring the mitochondrial nucleoids to the inner mitochondrial membrane. The polypeptide is Dynamin-like GTPase OPA1, mitochondrial (Homo sapiens (Human)).